Reading from the N-terminus, the 556-residue chain is Formate--tetrahydrofolate ligase (556 aa).

T65–S72 contacts ATP.

It belongs to the formate--tetrahydrofolate ligase family.

The catalysed reaction is (6S)-5,6,7,8-tetrahydrofolate + formate + ATP = (6R)-10-formyltetrahydrofolate + ADP + phosphate. It participates in one-carbon metabolism; tetrahydrofolate interconversion. The protein is Formate--tetrahydrofolate ligase of Streptococcus thermophilus (strain ATCC BAA-250 / LMG 18311).